Consider the following 539-residue polypeptide: uncharacterized protein (539 aa).

ABC transporter domains lie at leucine 9–lysine 276 and isoleucine 288–phenylalanine 536. Residues glycine 41–serine 48 and glycine 325–threonine 332 each bind ATP.

The protein belongs to the ABC transporter superfamily.

This is an uncharacterized protein from Methanocaldococcus jannaschii (strain ATCC 43067 / DSM 2661 / JAL-1 / JCM 10045 / NBRC 100440) (Methanococcus jannaschii).